The sequence spans 383 residues: Probable endoplasmic reticulum-Golgi intermediate compartment protein 3 (383 aa).

Residues 1–26 lie on the Cytoplasmic side of the membrane; sequence MLISQLKKFDAYPKTVDDFRVKTYTG. A helical transmembrane segment spans residues 27–47; it reads AIVSIIGGVFILWLFFSQVTL. Residues 48–347 lie on the Lumenal side of the membrane; that stretch reads YFSTDIHHEL…GKSFASFLTN (300 aa). A helical membrane pass occupies residues 348 to 368; the sequence is VCAIIGGVFTVFGIFDSFIYY. Residues 369 to 383 lie on the Cytoplasmic side of the membrane; it reads STKNLQKKIDLGKTF.

It belongs to the ERGIC family.

It is found in the endoplasmic reticulum-Golgi intermediate compartment membrane. The protein localises to the golgi apparatus. It localises to the cis-Golgi network membrane. The protein resides in the endoplasmic reticulum membrane. Possible role in transport between endoplasmic reticulum and Golgi. The polypeptide is Probable endoplasmic reticulum-Golgi intermediate compartment protein 3 (ergic3) (Dictyostelium discoideum (Social amoeba)).